Consider the following 325-residue polypeptide: 33 kDa chaperonin (325 aa).

Disulfide bonds link cysteine 260/cysteine 262 and cysteine 293/cysteine 296.

This sequence belongs to the HSP33 family. Post-translationally, under oxidizing conditions two disulfide bonds are formed involving the reactive cysteines. Under reducing conditions zinc is bound to the reactive cysteines and the protein is inactive.

The protein resides in the cytoplasm. In terms of biological role, redox regulated molecular chaperone. Protects both thermally unfolding and oxidatively damaged proteins from irreversible aggregation. Plays an important role in the bacterial defense system toward oxidative stress. The protein is 33 kDa chaperonin of Aquifex aeolicus (strain VF5).